The primary structure comprises 354 residues: Putative Xaa-Pro aminopeptidase (354 aa).

Mn(2+) is bound by residues aspartate 213, aspartate 224, histidine 290, glutamate 319, and glutamate 333.

It belongs to the peptidase M24B family. Mn(2+) serves as cofactor.

It carries out the reaction Release of any N-terminal amino acid, including proline, that is linked to proline, even from a dipeptide or tripeptide.. The chain is Putative Xaa-Pro aminopeptidase (pepP) from Mycoplasma genitalium (strain ATCC 33530 / DSM 19775 / NCTC 10195 / G37) (Mycoplasmoides genitalium).